A 437-amino-acid polypeptide reads, in one-letter code: Bystin (437 aa).

The tract at residues 1–105 is disordered; the sequence is MPKFKAARGV…DGSDDEDEEW (105 aa). An Omega-N-methylarginine modification is found at Arg-40. Position 55 is a phosphoserine (Ser-55). The segment covering 71–87 has biased composition (basic and acidic residues); it reads AEHGTGDKPAAPRERTT. Ser-98 is subject to Phosphoserine. Thr-156 carries the phosphothreonine modification. Ser-167 and Ser-414 each carry phosphoserine.

The protein belongs to the bystin family. In terms of assembly, binds trophinin, tastin and cytokeratins. Found in the placenta from the sixth week of pregnancy. Was localized in the cytoplasm of the syncytiotrophoblast in the chorionic villi and in endometrial decidual cells at the uteroplacental interface. After week 10, the level decreased and then disappeared from placental villi.

It is found in the cytoplasm. The protein resides in the nucleus. It localises to the nucleolus. Functionally, required for processing of 20S pre-rRNA precursor and biogenesis of 40S ribosomal subunits. May be required for trophinin-dependent regulation of cell adhesion during implantation of human embryos. The protein is Bystin of Homo sapiens (Human).